Here is a 295-residue protein sequence, read N- to C-terminus: Oxidoreductase AN1597 (295 aa).

It belongs to the asaB hydroxylase/desaturase family.

The protein operates within secondary metabolite biosynthesis; terpenoid biosynthesis. In terms of biological role, oxidoreductase; part of the gene cluster that mediates the biosynthesis of the diterpene ent-pimara-8(14),15-diene (PD). Within the cluster, the HMG-CoA reductase AN1593 functions in the mevalonate pathway, which produces isoprenoid precursors. The geranylgeranyl pyrophosphate (GGPP) synthase AN1592 is needed in the formation of GGPP, the precursor for diterpenes. Lastly, the pimaradiene synthase pbcA performs the 2 cyclization steps that convert GGPP to ent-pimara-8(14),15-diene. The putative roles of the remaining cluster enzymes in ent-pimara-8(14),15-diene biosynthesis is unclear. The cytochrome P450 monooxygenase AN1598, the glutathione S-transferase AN1595, the oxidoreductases AN1596 and AN1597 probably function as decorative enzymes. It is possible that in biological conditions the compound is oxidized to ent-pimara-8(14),15-dien-19-oic acid, which is a bioactive diterpene compound predominant in many plant extracts. In Emericella nidulans (strain FGSC A4 / ATCC 38163 / CBS 112.46 / NRRL 194 / M139) (Aspergillus nidulans), this protein is Oxidoreductase AN1597.